The following is a 254-amino-acid chain: 5'-nucleotidase SurE (254 aa).

4 residues coordinate a divalent metal cation: Asp8, Asp9, Ser39, and Asn97.

It belongs to the SurE nucleotidase family. The cofactor is a divalent metal cation.

The protein resides in the cytoplasm. The enzyme catalyses a ribonucleoside 5'-phosphate + H2O = a ribonucleoside + phosphate. Its function is as follows. Nucleotidase that shows phosphatase activity on nucleoside 5'-monophosphates. In Alkaliphilus metalliredigens (strain QYMF), this protein is 5'-nucleotidase SurE.